Consider the following 332-residue polypeptide: MKVTFEQLKAAFNRVLISRGVDSETADACAEMFARTTESGVYSHGVNRFPRFIQQLENGDIIPDAQPKRITSLGAIEQWDAQRSIGNLTAKKMMDRAIELAADHGIGLVALRNANHWMRGGSYGWQAAEKGYIGICWTNSIAVMPPWGAKECRIGTNPLIVAIPSTPITMVDMSMSMFSYGMLEVNRLAGRQLPVDGGFDDEGNLTKEPGVIEKNRRILPMGYWKGSGMSIVLDMIATLLSDGASVAEVTQDNSDEYGVSQIFIAIEVDKLIDGPTRDAKLQRIMDYVTTAERADENQAIRLPGHEFTTLLAENRRNGITVDDSVWAKIQAL.

The Proton donor role is filled by His-44. NAD(+) contacts are provided by residues 168-174, 224-225, and 304-306; these read ITMVDMS, WK, and GHE.

The protein belongs to the LDH2/MDH2 oxidoreductase family. DlgD subfamily. Homodimer.

The protein resides in the cytoplasm. The enzyme catalyses 3-dehydro-L-gulonate + NAD(+) = 2,3-dioxo-L-gulonate + NADH + H(+). The catalysed reaction is 3-dehydro-L-gulonate + NADP(+) = 2,3-dioxo-L-gulonate + NADPH + H(+). Functionally, catalyzes the reduction of 2,3-diketo-L-gulonate in the presence of NADH, to form 3-keto-L-gulonate. This Escherichia coli (strain SMS-3-5 / SECEC) protein is 2,3-diketo-L-gulonate reductase.